The sequence spans 230 residues: Ureidoacrylate amidohydrolase RutB (230 aa).

Aspartate 24 serves as the catalytic Proton acceptor. Residue lysine 133 is part of the active site. The Nucleophile role is filled by cysteine 166.

The protein belongs to the isochorismatase family. RutB subfamily.

It catalyses the reaction (Z)-3-ureidoacrylate + H2O + H(+) = (Z)-3-aminoacrylate + NH4(+) + CO2. The catalysed reaction is (Z)-3-ureidoacrylate + H2O = (Z)-3-aminoacrylate + carbamate + H(+). It carries out the reaction (Z)-2-methylureidoacrylate + H2O + H(+) = (Z)-2-methylaminoacrylate + NH4(+) + CO2. Functionally, hydrolyzes ureidoacrylate to form aminoacrylate and carbamate. The carbamate hydrolyzes spontaneously, thereby releasing one of the nitrogen atoms of the pyrimidine ring as ammonia and one of its carbon atoms as CO2. This is Ureidoacrylate amidohydrolase RutB from Escherichia coli O127:H6 (strain E2348/69 / EPEC).